A 324-amino-acid chain; its full sequence is uncharacterized protein (324 aa).

Helical transmembrane passes span 5 to 24 (VIGILASLFFAVTFILNRAM), 39 to 61 (FIFMVPFLCLIVIMRGTFTPLLL), 68 to 90 (FYWIKWSFVGFVLFYAPITFAAA), 95 to 117 (WLIAGTWQITIVAGVLLSPLFYV), 130 to 152 (QKIPLVSLGTSVIILIGAALIQL), 162 to 179 (MLLFSVLPVVIAAFAYPL), 199 to 218 (LGMTLASLPFWLILAAYGWW), and 228 to 250 (TVQSFIVAVSSGIIATVLFFWAT).

The protein localises to the cell membrane. This is an uncharacterized protein from Bacillus subtilis (strain 168).